The chain runs to 340 residues: Guanine nucleotide-binding protein subunit beta-1 (340 aa).

Serine 29 is modified (phosphoserine). 7 WD repeats span residues glycine 53 to alanine 92, leucine 95 to arginine 134, glycine 141 to serine 179, glycine 182 to threonine 221, glycine 224 to methionine 263, asparagine 268 to isoleucine 307, and glycine 310 to asparagine 340.

Belongs to the WD repeat G protein beta family. As to quaternary structure, g proteins are composed of 3 units, alpha, beta and gamma. Expressed in the brain neuropil and cortex, and the thoracic ganglion (at protein level). Expression detected in eye at protein level but not at mRNA level, suggesting cross reactivity of antibodies to the similar Gbeta76C protein.

Its function is as follows. Guanine nucleotide-binding proteins (G proteins) are involved as a modulator or transducer in various transmembrane signaling systems. The beta and gamma chains are required for the GTPase activity, for replacement of GDP by GTP, and for G protein-effector interaction. This chain is Guanine nucleotide-binding protein subunit beta-1 (Gbeta13F), found in Drosophila melanogaster (Fruit fly).